A 348-amino-acid chain; its full sequence is UDP-glucose 4-epimerase (348 aa).

NAD(+)-binding positions include 12–14 (GYI), 33–37 (DNFHN), 66–67 (DI), F88, and K92. Substrate is bound at residue 132 to 134 (SAT). Y157 functions as the Proton acceptor in the catalytic mechanism. K161 and Y185 together coordinate NAD(+). Residues 185-187 (YFN), 206-208 (NNL), 224-226 (NVF), R239, and 300-303 (REGD) contribute to the substrate site.

Belongs to the NAD(P)-dependent epimerase/dehydratase family. In terms of assembly, homodimer. The cofactor is NAD(+).

It catalyses the reaction UDP-alpha-D-glucose = UDP-alpha-D-galactose. The catalysed reaction is UDP-N-acetyl-alpha-D-glucosamine = UDP-N-acetyl-alpha-D-galactosamine. The protein operates within carbohydrate metabolism; galactose metabolism. Functionally, catalyzes two distinct but analogous reactions: the reversible epimerization of UDP-glucose to UDP-galactose and the reversible epimerization of UDP-N-acetylglucosamine to UDP-N-acetylgalactosamine. The reaction with UDP-Gal plays a critical role in the Leloir pathway of galactose catabolism in which galactose is converted to the glycolytic intermediate glucose 6-phosphate. It contributes to the catabolism of dietary galactose and enables the endogenous biosynthesis of both UDP-Gal and UDP-GalNAc when exogenous sources are limited. Both UDP-sugar interconversions are important in the synthesis of glycoproteins and glycolipids. The sequence is that of UDP-glucose 4-epimerase from Bos taurus (Bovine).